The following is a 134-amino-acid chain: Arsenate reductase (134 aa).

Active-site nucleophile residues include Cys-11, Cys-83, and Cys-90. Cystine bridges form between Cys-11/Cys-83 and Cys-83/Cys-90.

The protein belongs to the low molecular weight phosphotyrosine protein phosphatase family. Thioredoxin-coupled ArsC subfamily.

The protein resides in the cytoplasm. The catalysed reaction is arsenate + [thioredoxin]-dithiol + H(+) = arsenite + [thioredoxin]-disulfide + H2O. Catalyzes the reduction of arsenate [As(V)] to arsenite [As(III)]. The sequence is that of Arsenate reductase from Bacillus cereus (strain ZK / E33L).